A 583-amino-acid chain; its full sequence is Proteasome-associated ATPase (583 aa).

Positions 2-90 (ASREDRDAAN…REEVDRLAQP (89 aa)) form a coiled coil. 271–276 (GCGKTL) lines the ATP pocket. Positions 582–583 (YL) are docks into pockets in the proteasome alpha-ring.

The protein belongs to the AAA ATPase family. Homohexamer. Assembles into a hexameric ring structure that caps the 20S proteasome core. Strongly interacts with the prokaryotic ubiquitin-like protein Pup through a hydrophobic interface; the interacting region of ARC lies in its N-terminal coiled-coil domain. There is one Pup binding site per ARC hexamer ring. Upon ATP-binding, the C-terminus of ARC interacts with the alpha-rings of the proteasome core, possibly by binding to the intersubunit pockets.

The protein operates within protein degradation; proteasomal Pup-dependent pathway. ATPase which is responsible for recognizing, binding, unfolding and translocation of pupylated proteins into the bacterial 20S proteasome core particle. May be essential for opening the gate of the 20S proteasome via an interaction with its C-terminus, thereby allowing substrate entry and access to the site of proteolysis. Thus, the C-termini of the proteasomal ATPase may function like a 'key in a lock' to induce gate opening and therefore regulate proteolysis. This Acidothermus cellulolyticus (strain ATCC 43068 / DSM 8971 / 11B) protein is Proteasome-associated ATPase.